Here is a 181-residue protein sequence, read N- to C-terminus: Inner membrane-spanning protein YciB (181 aa).

A run of 5 helical transmembrane segments spans residues Ile-22–Val-42, Met-50–Asp-70, Ile-80–Ile-100, Ile-118–Phe-138, and Phe-148–Val-168.

The protein belongs to the YciB family.

The protein resides in the cell inner membrane. In terms of biological role, plays a role in cell envelope biogenesis, maintenance of cell envelope integrity and membrane homeostasis. This Aliivibrio salmonicida (strain LFI1238) (Vibrio salmonicida (strain LFI1238)) protein is Inner membrane-spanning protein YciB.